Here is a 623-residue protein sequence, read N- to C-terminus: Sodium-coupled monocarboxylate transporter 2 (623 aa).

Residues 1–10 lie on the Extracellular side of the membrane; the sequence is METVGRFQAG. Residues 11–31 form a helical membrane-spanning segment; the sequence is DYVVFACLFVVSSGIGVFFAI. The Cytoplasmic portion of the chain corresponds to 32-50; that stretch reads KERNKAPSKEFLVGGRQMS. The helical transmembrane segment at 51 to 71 threads the bilayer; the sequence is CGPVALSLTASFMSAVTVIGA. Topologically, residues 72–83 are extracellular; that stretch reads PADVYRFGASYV. The chain crosses the membrane as a helical span at residues 84–104; that stretch reads IFGVAYTFVVFFTAELFLPVF. The Cytoplasmic segment spans residues 105–129; sequence YRSGITSTYEYLELRFCKLVRVAAT. Residues 130–150 form a helical membrane-spanning segment; sequence LIYIIQTILYTGVVVYAPALA. The Extracellular portion of the chain corresponds to 151–158; it reads LNQVTGFD. Residues 159–179 form a helical membrane-spanning segment; sequence LWGSIFATGIVCTFYCTLGGL. Residues 180–181 are Cytoplasmic-facing; that stretch reads KA. The chain crosses the membrane as a helical span at residues 182–202; it reads VVWTDAFQMVVMVVGFLTVLI. Over 203–236 the chain is Extracellular; that stretch reads QGSSRAGGIENVWSTSRTGGRLQVFDFDVSPLRR. A helical transmembrane segment spans residues 237-257; sequence HTFWTLSVGGTFTWLGIYGVN. The Cytoplasmic portion of the chain corresponds to 258-276; it reads QSTIQRCISCKTEGHARWA. Residues 277 to 297 traverse the membrane as a helical segment; sequence LYLNLLGLWIILFCAVVSGLI. The Extracellular segment spans residues 298 to 322; the sequence is MYSYYSHCDPWSSGLISAPDQLMPY. Residues 323–343 form a helical membrane-spanning segment; sequence FVMEILGAFPGLPGLFVACAF. Over 344-386 the chain is Cytoplasmic; sequence SGTLSTVAASINALATVMYEDFVSQCFPDLSNRAASWISKALC. A helical membrane pass occupies residues 387–407; the sequence is VAFGVACTTMAVAASYMGGIV. Over 408–412 the chain is Extracellular; sequence QAALS. Residues 413 to 433 traverse the membrane as a helical segment; that stretch reads IHGMCGGPVLGLFSLGILFPF. The Cytoplasmic segment spans residues 434–438; sequence TNLKG. The chain crosses the membrane as a helical span at residues 439–459; sequence AVGGLIVGISLSFWVGVGAFI. Residues 460–510 are Extracellular-facing; the sequence is YPAPSNNTHALELNTAGCNITAAAFEPTSATVTQLTSDRNWLADSWYSMSY. Residues Asn-465 and Asn-478 are each glycosylated (N-linked (GlcNAc...) asparagine). A helical transmembrane segment spans residues 511-531; the sequence is LYYSAVGFIGTVAAGLLITLL. Residues 532–623 lie on the Cytoplasmic side of the membrane; it reads TGPMDPKLLK…NETSIVQKKL (92 aa).

It belongs to the sodium:solute symporter (SSF) (TC 2.A.21) family.

The protein localises to the apical cell membrane. It carries out the reaction (S)-lactate(out) + Na(+)(out) = (S)-lactate(in) + Na(+)(in). It catalyses the reaction nicotinate(out) + Na(+)(out) = nicotinate(in) + Na(+)(in). The enzyme catalyses pyruvate(out) + Na(+)(out) = pyruvate(in) + Na(+)(in). The catalysed reaction is propanoate(out) + Na(+)(out) = propanoate(in) + Na(+)(in). It carries out the reaction butanoate(out) + Na(+)(out) = butanoate(in) + Na(+)(in). It catalyses the reaction acetoacetate(out) + Na(+)(out) = acetoacetate(in) + Na(+)(in). Functionally, acts as an electroneutral and low-affinity sodium (Na(+))-dependent sodium-coupled solute transporter. Catalyzes the transport across the plasma membrane of many monocarboxylates such as lactate, pyruvate, nicotinate, propionate, butyrate and beta-D-hydroxybutyrate. The polypeptide is Sodium-coupled monocarboxylate transporter 2 (slc5a12) (Danio rerio (Zebrafish)).